Reading from the N-terminus, the 665-residue chain is Prelamin-A/C (665 aa).

Position 1 is an N-acetylmethionine (Met-1). The interval 1-27 (METPSQRRPTRSGAQASSTPLSPTRIT) is disordered. Residues 1 to 33 (METPSQRRPTRSGAQASSTPLSPTRITRLQEKE) are head. The interval 1 to 130 (METPSQRRPT…TKKEGDLLAA (130 aa)) is interaction with MLIP. Thr-3 is subject to Phosphothreonine. The residue at position 5 (Ser-5) is a Phosphoserine. Thr-10 bears the Phosphothreonine mark. 2 positions are modified to phosphoserine: Ser-12 and Ser-18. Thr-19 bears the Phosphothreonine mark. Ser-22 bears the Phosphoserine mark. The 357-residue stretch at 31 to 387 (EKEDLQELND…KLLEGEEERL (357 aa)) folds into the IF rod domain. The residue at position 32 (Lys-32) is an N6-acetyllysine; alternate. Lys-32 carries the N6-succinyllysine; alternate modification. Residue Lys-32 forms a Glycyl lysine isopeptide (Lys-Gly) (interchain with G-Cter in SUMO2); alternate linkage. A coil 1A region spans residues 34 to 70 (DLQELNDRLAVYIDRVRSLETENAGLRLRITESEEVV). Ser-51, Ser-66, and Ser-71 each carry phosphoserine. The segment at 71 to 80 (SREVSGIKAA) is linker 1. Lys-78 and Lys-97 each carry N6-acetyllysine. Residues 81-218 (YEAELGDARK…NIYSEELRET (138 aa)) form a coil 1B region. A Glycyl lysine isopeptide (Lys-Gly) (interchain with G-Cter in SUMO2) cross-link involves residue Lys-97. Ser-107 carries the phosphoserine modification. 6 positions are modified to N6-acetyllysine: Lys-108, Lys-114, Lys-123, Lys-135, Lys-144, and Lys-155. Lys-171 is modified (N6-acetyllysine; alternate). Lys-171 is modified (N6-succinyllysine; alternate). A Glycyl lysine isopeptide (Lys-Gly) (interchain with G-Cter in SUMO2); alternate cross-link involves residue Lys-171. Residues Lys-180, Lys-201, and Lys-208 each carry the N6-acetyllysine modification. Lys-201 is covalently cross-linked (Glycyl lysine isopeptide (Lys-Gly) (interchain with G-Cter in SUMO2); alternate). Lys-201 participates in a covalent cross-link: Glycyl lysine isopeptide (Lys-Gly) (interchain with G-Cter in SUMO); alternate. Lys-208 is covalently cross-linked (Glycyl lysine isopeptide (Lys-Gly) (interchain with G-Cter in SUMO2)). Ser-212 is subject to Phosphoserine. Glycyl lysine isopeptide (Lys-Gly) (interchain with G-Cter in SUMO2) cross-links involve residues Lys-219 and Lys-233. Residues 219-242 (KRRHETRLVEIDNGKQREFESRLA) are linker 2. 4 positions are modified to N6-acetyllysine: Lys-233, Lys-260, Lys-265, and Lys-270. A coil 2 region spans residues 243 to 383 (DALQELRAQH…HAYRKLLEGE (141 aa)). Lys-260 is covalently cross-linked (Glycyl lysine isopeptide (Lys-Gly) (interchain with G-Cter in SUMO2); alternate). Lys-270 participates in a covalent cross-link: Glycyl lysine isopeptide (Lys-Gly) (interchain with G-Cter in SUMO2); alternate. Phosphoserine is present on residues Ser-277, Ser-282, Ser-301, and Ser-307. Residue Lys-311 forms a Glycyl lysine isopeptide (Lys-Gly) (interchain with G-Cter in SUMO2); alternate linkage. N6-acetyllysine occurs at positions 311, 316, and 341. Glycyl lysine isopeptide (Lys-Gly) (interchain with G-Cter in SUMO2) cross-links involve residues Lys-366 and Lys-378. A disordered region spans residues 384-442 (EERLRLSPSPTSQRSRGRASSHSSQSQGGGSVTKKRKLESSESRSSFSQHARTSGRVAV). Residues 384–665 (EERLRLSPSP…TQSSQNCSIM (282 aa)) are tail. Phosphoserine occurs at positions 390, 392, 395, 398, 403, 404, 406, 407, 409, and 414. Residues 395 to 409 (SQRSRGRASSHSSQS) are compositionally biased toward low complexity. Thr-416 carries the phosphothreonine modification. Position 417 is an N6-acetyllysine (Lys-417). Residues Lys-417 and Lys-420 each participate in a glycyl lysine isopeptide (Lys-Gly) (interchain with G-Cter in SUMO2) cross-link. A Nuclear localization signal motif is present at residues 417–422 (KKRKLE). Residues Ser-423, Ser-426, Ser-429, and Ser-431 each carry the phosphoserine modification. Residues 428–545 (SSFSQHARTS…EEVAMRKLVR (118 aa)) form the LTD domain. Residue Lys-450 forms a Glycyl lysine isopeptide (Lys-Gly) (interchain with G-Cter in SUMO2); alternate linkage. N6-acetyllysine is present on residues Lys-450 and Lys-457. A phosphoserine mark is found at Ser-458 and Ser-463. Residues Lys-470 and Lys-486 each participate in a glycyl lysine isopeptide (Lys-Gly) (interchain with G-Cter in SUMO2) cross-link. Position 486 is an N6-acetyllysine (Lys-486). Thr-496 carries the phosphothreonine modification. Ser-500 is subject to Phosphoserine. Phosphothreonine occurs at positions 505 and 510. Phosphoserine is present on Ser-546. At Thr-548 the chain carries Phosphothreonine. Residues 552 to 561 (DNDDEEEDGD) show a composition bias toward acidic residues. The segment at 552 to 577 (DNDDEEEDGDELLHHHRGSHCSSSGD) is disordered. Residues Ser-570 and Ser-573 each carry the phosphoserine modification. Residue Lys-599 forms a Glycyl lysine isopeptide (Lys-Gly) (interchain with G-Cter in SUMO2); alternate linkage. Residue Lys-599 forms a Glycyl lysine isopeptide (Lys-Gly) (interchain with G-Cter in SUMO1); alternate linkage. 4 positions are modified to phosphoserine: Ser-613, Ser-614, Ser-617, and Ser-620. Residues Ser-626 and Ser-629 are each glycosylated (O-linked (GlcNAc) serine). Residues Ser-629, Ser-633, Ser-637, and Ser-653 each carry the phosphoserine modification. A propeptide spans 648–662 (LLGNSSPRTQSSQNC) (removed in Lamin-A/C form). A Cysteine methyl ester modification is found at Cys-662. Cys-662 is lipidated: S-farnesyl cysteine. Residues 663–665 (SIM) constitute a propeptide, removed in Prelamin-A/C form and in Lamin-A/C form.

This sequence belongs to the intermediate filament family. Homodimer of lamin A and lamin C. Lamin dimers then assemble into dimeric head-to-tail polymers. Ultimately, two head-to-tail polymers assemble laterally into a protofilament with a uniformly shaped rod of 3.5 nm in diameter. Interacts with lamin-associated polypeptides IA, IB and TMPO-alpha, RB1 and with emerin. Interacts with SREBF1, SREBF2, SUN2 and TMEM43. Interacts with TMEM201. Proteolytically processed isoform A interacts with NARF. Interacts with SUN1. Interacts with MLIP. Interacts with DMPK; may regulate nuclear envelope stability. Interacts with SUV39H1; the interaction increases stability of SUV39H1. Interacts with SYNE2. Interacts with ITSN1 isoform 2. Interacts with IFFO1; enables the formation of an interior nucleoskeleton that is recruited to DNA double-strand breaks. In terms of assembly, interacts with EMD. As to quaternary structure, interacts (via C-terminus) with LEMD2 (via N-terminus) (in vitro). In terms of processing, proteolytic cleavage of the C-terminal of 18 residues of prelamin-A/C results in the production of lamin-A/C. The prelamin-A/C maturation pathway includes farnesylation of CAAX motif by protein farnesyltransferase (FNTA and FNTB), removal of the last three amino acids (-AAX) by RCE1/FACE2 and/or ZMPSTE24, methylation of the C-terminal cysteine by ICMT and endoproteolytic removal of the last 15 C-terminal amino acids by ZMPSTE24. Proteolytic cleavage requires prior farnesylation and methylation, and absence of these blocks cleavage. Post-translationally, farnesylation of prelamin-A/C facilitates nuclear envelope targeting. Phosphorylation plays a key role in lamin organization, subcellular localization and nuclear envelope disintegration. Phosphorylation by CDK1 at Ser-22 and Ser-392 at the onset of mitosis drives lamin disassembly and nuclear envelope breakdown. Phosphorylation at Ser-22 and Ser-392 during interphase promotes localization to the nucleoplasm and regulates lamina assembly. Phosphorylation at Ser-22, Ser-392 and Ser-629 during interphase causes redistribution between the nucleus and the cytoplasm. Phosphorylation at Ser-22 by CDK1 regulates matrix stiffness. Phosphorylation status of Ser-22 determines its localization between double-strand break (DSB) sites and the nuclear matrix. Phosphorylated by ATR at Ser-282 in response to DNA damage, leading to lamin disassembly and nuclear envelope rupture. Phosphorylation also regulates stability in micronuclei arising from genome instability: phosphorylation at Ser-395 by ATR in response to genome instability and double-stranded DNA breaks primes LMNA for subsequent phosphorylation at Ser-392 by CDK1 and micronuclei envelope rupture. The rupture of micronuclear envelope triggers the cGAS-STING pathway thereby activating the type I interferon response and innate immunity. In terms of processing, acetylation by KAT8 is required for nuclear architecture. Post-translationally, sumoylation is necessary for the localization to the nuclear envelope.

The protein localises to the nucleus lamina. It is found in the nucleus envelope. Its subcellular location is the nucleus. It localises to the nucleoplasm. The protein resides in the nucleus matrix. Functionally, lamins are intermediate filament proteins that assemble into a filamentous meshwork, and which constitute the major components of the nuclear lamina, a fibrous layer on the nucleoplasmic side of the inner nuclear membrane. Lamins provide a framework for the nuclear envelope, bridging the nuclear envelope and chromatin, thereby playing an important role in nuclear assembly, chromatin organization, nuclear membrane and telomere dynamics. Lamin A and C also regulate matrix stiffness by conferring nuclear mechanical properties. The structural integrity of the lamina is strictly controlled by the cell cycle, as seen by the disintegration and formation of the nuclear envelope in prophase and telophase, respectively. Lamin A and C are present in equal amounts in the lamina of mammals. Also invoved in DNA repair: recruited by DNA repair proteins XRCC4 and IFFO1 to the DNA double-strand breaks (DSBs) to prevent chromosome translocation by immobilizing broken DNA ends. Required for normal development of peripheral nervous system and skeletal muscle and for muscle satellite cell proliferation. Required for osteoblastogenesis and bone formation. Also prevents fat infiltration of muscle and bone marrow, helping to maintain the volume and strength of skeletal muscle and bone. Required for cardiac homeostasis. Prelamin-A/C can accelerate smooth muscle cell senescence. It acts to disrupt mitosis and induce DNA damage in vascular smooth muscle cells (VSMCs), leading to mitotic failure, genomic instability, and premature senescence. The polypeptide is Prelamin-A/C (Lmna) (Rattus norvegicus (Rat)).